We begin with the raw amino-acid sequence, 445 residues long: tRNA modification GTPase MnmE (445 aa).

Residues R20, E79, and K119 each contribute to the (6S)-5-formyl-5,6,7,8-tetrahydrofolate site. Residues 215–371 (GLKLAIIGPP…ILKNIENIAE (157 aa)) form the TrmE-type G domain. Residue N225 participates in K(+) binding. GTP-binding positions include 225–230 (NTGKSS), 244–250 (SNIAGTT), and 269–272 (DTAG). A Mg(2+)-binding site is contributed by S229. Positions 244, 246, and 249 each coordinate K(+). Position 250 (T250) interacts with Mg(2+). (6S)-5-formyl-5,6,7,8-tetrahydrofolate is bound at residue K445.

The protein belongs to the TRAFAC class TrmE-Era-EngA-EngB-Septin-like GTPase superfamily. TrmE GTPase family. As to quaternary structure, homodimer. Heterotetramer of two MnmE and two MnmG subunits. The cofactor is K(+).

Its subcellular location is the cytoplasm. Functionally, exhibits a very high intrinsic GTPase hydrolysis rate. Involved in the addition of a carboxymethylaminomethyl (cmnm) group at the wobble position (U34) of certain tRNAs, forming tRNA-cmnm(5)s(2)U34. The sequence is that of tRNA modification GTPase MnmE from Rickettsia typhi (strain ATCC VR-144 / Wilmington).